Consider the following 194-residue polypeptide: Prostaglandin-H2 D-isomerase (194 aa).

The signal sequence occupies residues 1–24 (MAASHTLWMGLVLLGVLGVLQTRA). A Pyrrolidone carboxylic acid modification is found at Q25. N51 is a glycosylation site (N-linked (GlcNAc...) asparagine). The Nucleophile role is filled by C65. N-linked (GlcNAc...) asparagine glycosylation is present at N78. C89 and C189 are oxidised to a cystine.

The protein belongs to the calycin superfamily. Lipocalin family. As to quaternary structure, monomer. In terms of tissue distribution, in the male reproductive system, it is expressed in the testis and epididymis, and is secreted into the seminal fluid.

The protein localises to the rough endoplasmic reticulum. It localises to the nucleus membrane. The protein resides in the golgi apparatus. It is found in the cytoplasm. Its subcellular location is the perinuclear region. The protein localises to the secreted. It catalyses the reaction prostaglandin H2 = prostaglandin D2. Its function is as follows. Catalyzes the conversion of PGH2 to PGD2, a prostaglandin involved in smooth muscle contraction/relaxation and a potent inhibitor of platelet aggregation. Involved in a variety of CNS functions, such as sedation, NREM sleep and PGE2-induced allodynia, and may have an anti-apoptotic role in oligodendrocytes. Binds small non-substrate lipophilic molecules, including biliverdin, bilirubin, retinal, retinoic acid and thyroid hormone, and may act as a scavenger for harmful hydrophobic molecules and as a secretory retinoid and thyroid hormone transporter. Possibly involved in development and maintenance of the blood-brain, blood-retina, blood-aqueous humor and blood-testis barrier. It is likely to play important roles in both maturation and maintenance of the central nervous system and male reproductive system. Involved in PLA2G3-dependent maturation of mast cells. PLA2G3 is secreted by immature mast cells and acts on nearby fibroblasts upstream to PTDGS to synthesize PGD2, which in turn promotes mast cell maturation and degranulation via PTGDR. The polypeptide is Prostaglandin-H2 D-isomerase (PTGDS) (Equus caballus (Horse)).